Consider the following 162-residue polypeptide: 2-C-methyl-D-erythritol 2,4-cyclodiphosphate synthase (162 aa).

Aspartate 10 and histidine 12 together coordinate a divalent metal cation. 4-CDP-2-C-methyl-D-erythritol 2-phosphate contacts are provided by residues 10–12 and 36–37; these read DVH and HS. Histidine 44 provides a ligand contact to a divalent metal cation. Residues 58-60, 63-67, 102-108, 134-137, phenylalanine 141, and arginine 144 each bind 4-CDP-2-C-methyl-D-erythritol 2-phosphate; these read DIG, FPDTD, AQAPKMA, and TTTE.

The protein belongs to the IspF family. As to quaternary structure, homotrimer. Requires a divalent metal cation as cofactor.

The enzyme catalyses 4-CDP-2-C-methyl-D-erythritol 2-phosphate = 2-C-methyl-D-erythritol 2,4-cyclic diphosphate + CMP. It participates in isoprenoid biosynthesis; isopentenyl diphosphate biosynthesis via DXP pathway; isopentenyl diphosphate from 1-deoxy-D-xylulose 5-phosphate: step 4/6. Its function is as follows. Involved in the biosynthesis of isopentenyl diphosphate (IPP) and dimethylallyl diphosphate (DMAPP), two major building blocks of isoprenoid compounds. Catalyzes the conversion of 4-diphosphocytidyl-2-C-methyl-D-erythritol 2-phosphate (CDP-ME2P) to 2-C-methyl-D-erythritol 2,4-cyclodiphosphate (ME-CPP) with a corresponding release of cytidine 5-monophosphate (CMP). The sequence is that of 2-C-methyl-D-erythritol 2,4-cyclodiphosphate synthase from Pseudoalteromonas atlantica (strain T6c / ATCC BAA-1087).